A 204-amino-acid polypeptide reads, in one-letter code: Methyl-CpG-binding domain protein 3-like 2B (204 aa).

A compositionally biased stretch (basic and acidic residues) spans 126–137 (SLDRAGAERVRS). The tract at residues 126-145 (SLDRAGAERVRSPLEPTPGR) is disordered.

The protein belongs to the MBD3L family.

The polypeptide is Methyl-CpG-binding domain protein 3-like 2B (Homo sapiens (Human)).